A 78-amino-acid chain; its full sequence is MDRKRTKLELLFAFIINATAIYIALAIYDCVFRGKDFLSMHTFCFSALMSAICYFVGDNYYSISDKIKRRSYENSDSK.

Its function is as follows. This protein is able to protect a cell, which harbors the plasmid ColV encoding colicin V, against colicin V. This is Colicin-V immunity protein (cvi) from Escherichia coli.